Here is a 581-residue protein sequence, read N- to C-terminus: MNIENYLSETLAKVFQKLGYAESFAKVVTSTREDVGHFQCNGAMPLAKFAKKPPLAIAEEIVEHIDAEDIFAKLEVAKPGFINITLAPKFLADTTNRFLNSNKFGVQNNLPNRKVVLDFGGPNVAKPMHVGHIRSALLGDALQRIHRFCGDTVVSDVHLGDWGTQMGMLIEEIKLQSPQLVYFDENYTGEYPTESPVTVQELAEIYPRASKRCKSDINEMEKARLATFELQQGRRGYVALWQHFVRISIDAVKKDFDSLDVHFDLWLGESDANKFIDEMISYFQANNFIYEDEGAWVIDTNKDGVPPLIVIKKDGGVMYGTTDLATLWQRSKDLDPDEIIYVVDKRQSLHFKQVFSVAERTKVVSEKCKLKHVAFGTVNGKDGRPFKTREGGVMHLADLISQAKEYAKNRMPDENDDSIIDQIAMATIKFGDLINNYANDYFFDLEKFAQHEGKTGPYLLYTVVRAKSILRKIFGDNYDIKSLAKDYKVVNAHNEYEEKLQLQLIQFPIAVQRAYENSQPHHICEYAYSLANSFNKFYVNCPINNLDDESLKKARIALCMATVKAMTIASDLIGISIPERM.

The 'HIGH' region signature appears at 122 to 132 (PNVAKPMHVGH).

Belongs to the class-I aminoacyl-tRNA synthetase family. In terms of assembly, monomer.

The protein localises to the cytoplasm. The catalysed reaction is tRNA(Arg) + L-arginine + ATP = L-arginyl-tRNA(Arg) + AMP + diphosphate. The polypeptide is Arginine--tRNA ligase (Francisella tularensis subsp. tularensis (strain WY96-3418)).